Here is a 312-residue protein sequence, read N- to C-terminus: Ribonuclease Z (312 aa).

Zn(2+) is bound by residues H62, H64, D66, H67, H144, D215, and H273. The Proton acceptor role is filled by D66.

It belongs to the RNase Z family. Homodimer. Zn(2+) serves as cofactor.

The catalysed reaction is Endonucleolytic cleavage of RNA, removing extra 3' nucleotides from tRNA precursor, generating 3' termini of tRNAs. A 3'-hydroxy group is left at the tRNA terminus and a 5'-phosphoryl group is left at the trailer molecule.. Functionally, zinc phosphodiesterase, which displays some tRNA 3'-processing endonuclease activity. Probably involved in tRNA maturation, by removing a 3'-trailer from precursor tRNA. This Prochlorococcus marinus (strain MIT 9515) protein is Ribonuclease Z.